The chain runs to 358 residues: Methylthioribose-1-phosphate isomerase (358 aa).

Substrate-binding positions include 54 to 56 (RGA), Arg-96, and Gln-205. Asp-246 (proton donor) is an active-site residue. 256-257 (NK) is a substrate binding site.

It belongs to the eIF-2B alpha/beta/delta subunits family. MtnA subfamily.

It catalyses the reaction 5-(methylsulfanyl)-alpha-D-ribose 1-phosphate = 5-(methylsulfanyl)-D-ribulose 1-phosphate. It participates in amino-acid biosynthesis; L-methionine biosynthesis via salvage pathway; L-methionine from S-methyl-5-thio-alpha-D-ribose 1-phosphate: step 1/6. Its function is as follows. Catalyzes the interconversion of methylthioribose-1-phosphate (MTR-1-P) into methylthioribulose-1-phosphate (MTRu-1-P). The polypeptide is Methylthioribose-1-phosphate isomerase (Pseudomonas paraeruginosa (strain DSM 24068 / PA7) (Pseudomonas aeruginosa (strain PA7))).